The chain runs to 320 residues: Malate dehydrogenase (320 aa).

NAD(+)-binding positions include 10–15 (GAGQIG) and aspartate 34. Substrate contacts are provided by arginine 83 and arginine 89. NAD(+)-binding positions include asparagine 96 and 119–121 (ITN). Substrate contacts are provided by asparagine 121 and arginine 152. Histidine 176 serves as the catalytic Proton acceptor.

This sequence belongs to the LDH/MDH superfamily. MDH type 3 family.

It catalyses the reaction (S)-malate + NAD(+) = oxaloacetate + NADH + H(+). In terms of biological role, catalyzes the reversible oxidation of malate to oxaloacetate. The polypeptide is Malate dehydrogenase (Methylorubrum extorquens (strain CM4 / NCIMB 13688) (Methylobacterium extorquens)).